We begin with the raw amino-acid sequence, 265 residues long: Probable S-methyl-5'-thioinosine phosphorylase (265 aa).

Phosphate is bound by residues Ser-15 and 55 to 56 (RH). Met-187 is a binding site for substrate. Position 188 (Thr-188) interacts with phosphate. 211–213 (NYA) contacts substrate.

The protein belongs to the PNP/MTAP phosphorylase family. MTAP subfamily. Homotrimer.

It catalyses the reaction S-methyl-5'-thioinosine + phosphate = 5-(methylsulfanyl)-alpha-D-ribose 1-phosphate + hypoxanthine. It functions in the pathway purine metabolism; purine nucleoside salvage. Catalyzes the reversible phosphorylation of S-methyl-5'-thioinosine (MTI) to hypoxanthine and 5-methylthioribose-1-phosphate. Involved in the breakdown of S-methyl-5'-thioadenosine (MTA), a major by-product of polyamine biosynthesis. Catabolism of (MTA) occurs via deamination to MTI and phosphorolysis to hypoxanthine. The sequence is that of Probable S-methyl-5'-thioinosine phosphorylase from Thermodesulfovibrio yellowstonii (strain ATCC 51303 / DSM 11347 / YP87).